The primary structure comprises 413 residues: Protein trichome birefringence-like 9 (413 aa).

The chain crosses the membrane as a helical; Signal-anchor for type II membrane protein span at residues 22-42 (LFVSLFLLSLLIFSTVVVDVM). The short motif at 141-143 (GDS) is the GDS motif element. The DCXHWCLPGXXDXWN motif signature appears at 384–398 (DCSHWCLPGVPDTWN).

The protein belongs to the PC-esterase family. TBL subfamily.

Its subcellular location is the membrane. May act as a bridging protein that binds pectin and other cell wall polysaccharides. Probably involved in maintaining esterification of pectins. May be involved in the specific O-acetylation of cell wall polymers. This Arabidopsis thaliana (Mouse-ear cress) protein is Protein trichome birefringence-like 9 (TBL9).